The following is a 214-amino-acid chain: CASP-like protein UU5 (214 aa).

Positions 1 to 20 are disordered; that stretch reads MSTVAQDSAPGGGKIQDAME. At 1–57 the chain is on the cytoplasmic side; sequence MSTVAQDSAPGGGKIQDAMEQGAPGASSAAVVPEGGHYTQTPSPAFQAVKKNINHMS. Residues 58 to 78 traverse the membrane as a helical segment; it reads AFSLGLRVAEFVLSVIAFSLM. At 79-99 the chain is on the extracellular side; the sequence is ASADQNGAVYSTFTSYSFVLA. The chain crosses the membrane as a helical span at residues 100 to 120; sequence VNVLVVFYTIGQIIMSVLLLV. The Cytoplasmic segment spans residues 121–138; the sequence is SGSTPKKIYLFITFGCDQ. The chain crosses the membrane as a helical span at residues 139–159; sequence LSAFLLMAAGAAGASVALIIN. Over 160–193 the chain is Extracellular; it reads RGGVTDAYGNGCIDGKITSFCSHAQASVAFTFLS. A helical transmembrane segment spans residues 194–214; that stretch reads FFCMVISSLLGVYSLAPYLIL.

This sequence belongs to the Casparian strip membrane proteins (CASP) family. As to quaternary structure, homodimer and heterodimers.

It is found in the cell membrane. In Physcomitrium patens (Spreading-leaved earth moss), this protein is CASP-like protein UU5.